The primary structure comprises 183 residues: Thymidine kinase (183 aa).

Residue Gly-11–Thr-18 participates in ATP binding. Glu-89 acts as the Proton acceptor in catalysis. Residue Phe-119 coordinates substrate. Cys-144 and Cys-147 together coordinate Zn(2+). Val-163–Gly-167 lines the substrate pocket. Cys-176 and Cys-179 together coordinate Zn(2+).

It belongs to the thymidine kinase family.

It catalyses the reaction thymidine + ATP = dTMP + ADP + H(+). This chain is Thymidine kinase (TK), found in Vertebrata (FPV).